Here is a 447-residue protein sequence, read N- to C-terminus: Na(+)-translocating NADH-quinone reductase subunit A (447 aa).

The protein belongs to the NqrA family. As to quaternary structure, composed of six subunits; NqrA, NqrB, NqrC, NqrD, NqrE and NqrF.

The enzyme catalyses a ubiquinone + n Na(+)(in) + NADH + H(+) = a ubiquinol + n Na(+)(out) + NAD(+). In terms of biological role, NQR complex catalyzes the reduction of ubiquinone-1 to ubiquinol by two successive reactions, coupled with the transport of Na(+) ions from the cytoplasm to the periplasm. NqrA to NqrE are probably involved in the second step, the conversion of ubisemiquinone to ubiquinol. The sequence is that of Na(+)-translocating NADH-quinone reductase subunit A from Tolumonas auensis (strain DSM 9187 / NBRC 110442 / TA 4).